Consider the following 258-residue polypeptide: Dihydroorotate dehydrogenase B (NAD(+)), electron transfer subunit (258 aa).

The FAD-binding FR-type domain occupies 2–100 (ILKENLTVVS…LGPQGNGFDL (99 aa)). FAD-binding positions include 51–54 (RPIS), 68–70 (IYR), and 75–76 (GT). The [2Fe-2S] cluster site is built by Cys-220, Cys-225, Cys-228, and Cys-244.

This sequence belongs to the PyrK family. Heterotetramer of 2 PyrK and 2 PyrD type B subunits. The cofactor is [2Fe-2S] cluster. It depends on FAD as a cofactor.

It functions in the pathway pyrimidine metabolism; UMP biosynthesis via de novo pathway; orotate from (S)-dihydroorotate (NAD(+) route): step 1/1. Responsible for channeling the electrons from the oxidation of dihydroorotate from the FMN redox center in the PyrD type B subunit to the ultimate electron acceptor NAD(+). This chain is Dihydroorotate dehydrogenase B (NAD(+)), electron transfer subunit, found in Streptococcus mutans serotype c (strain ATCC 700610 / UA159).